The primary structure comprises 65 residues: MREGIHPKYNEVTVKCLCGNTFQTRSTKPEISTEICSACHPFFTGKQKLVDTAGRVERFKKRYGM.

Positions 16, 18, 36, and 39 each coordinate Zn(2+).

Belongs to the bacterial ribosomal protein bL31 family. Type A subfamily. As to quaternary structure, part of the 50S ribosomal subunit. The cofactor is Zn(2+).

Binds the 23S rRNA. The polypeptide is Large ribosomal subunit protein bL31 (Geotalea daltonii (strain DSM 22248 / JCM 15807 / FRC-32) (Geobacter daltonii)).